The primary structure comprises 1273 residues: DNA gyrase subunit A (1273 aa).

Residues leucine 42 to leucine 931 form the Topo IIA-type catalytic domain. Tyrosine 130 (O-(5'-phospho-DNA)-tyrosine intermediate) is an active-site residue. The region spanning leucine 256–valine 396 is the DOD-type homing endonuclease domain. The GyrA-box signature appears at glutamine 958 to glycine 964.

The protein belongs to the type II topoisomerase GyrA/ParC subunit family. In terms of assembly, heterotetramer, composed of two GyrA and two GyrB chains. In the heterotetramer, GyrA contains the active site tyrosine that forms a transient covalent intermediate with the DNA, while GyrB binds cofactors catalyzes ATP hydrolysis. In terms of processing, this protein undergoes a protein self splicing that involves a post-translational excision of the intervening region (intein) followed by peptide ligation.

It is found in the cytoplasm. It catalyses the reaction ATP-dependent breakage, passage and rejoining of double-stranded DNA.. With respect to regulation, DNA supercoiling is inhibited by fluoroquinolones; IC(50) 1 ug/ml for sitafloxacin. Its function is as follows. A type II topoisomerase that negatively supercoils closed circular double-stranded (ds) DNA in an ATP-dependent manner to modulate DNA topology and maintain chromosomes in an underwound state. Negative supercoiling favors strand separation, and DNA replication, transcription, recombination and repair, all of which involve strand separation. Also able to catalyze the interconversion of other topological isomers of dsDNA rings, including catenanes and knotted rings. Type II topoisomerases break and join 2 DNA strands simultaneously in an ATP-dependent manner. This chain is DNA gyrase subunit A, found in Mycobacterium leprae (strain TN).